Consider the following 181-residue polypeptide: Putative ankyrin repeat protein RF_0782 (181 aa).

2 ANK repeats span residues 24–53 and 54–83; these read YHYSPLATAASVGSVEIVEALLSKGADINF and GSTPSFITAIKNGHLKICYLLKALGANTQI.

The protein is Putative ankyrin repeat protein RF_0782 of Rickettsia felis (strain ATCC VR-1525 / URRWXCal2) (Rickettsia azadi).